The sequence spans 421 residues: Serine--tRNA ligase (421 aa).

230–232 (TAE) serves as a coordination point for L-serine. ATP is bound at residue 259 to 261 (RRE). Glu-282 serves as a coordination point for L-serine. 346–349 (EISS) serves as a coordination point for ATP. Ser-381 serves as a coordination point for L-serine.

Belongs to the class-II aminoacyl-tRNA synthetase family. Type-1 seryl-tRNA synthetase subfamily. Homodimer. The tRNA molecule binds across the dimer.

The protein localises to the cytoplasm. It carries out the reaction tRNA(Ser) + L-serine + ATP = L-seryl-tRNA(Ser) + AMP + diphosphate + H(+). It catalyses the reaction tRNA(Sec) + L-serine + ATP = L-seryl-tRNA(Sec) + AMP + diphosphate + H(+). It participates in aminoacyl-tRNA biosynthesis; selenocysteinyl-tRNA(Sec) biosynthesis; L-seryl-tRNA(Sec) from L-serine and tRNA(Sec): step 1/1. In terms of biological role, catalyzes the attachment of serine to tRNA(Ser). Is also able to aminoacylate tRNA(Sec) with serine, to form the misacylated tRNA L-seryl-tRNA(Sec), which will be further converted into selenocysteinyl-tRNA(Sec). The protein is Serine--tRNA ligase of Acidithiobacillus ferrooxidans (strain ATCC 23270 / DSM 14882 / CIP 104768 / NCIMB 8455) (Ferrobacillus ferrooxidans (strain ATCC 23270)).